We begin with the raw amino-acid sequence, 143 residues long: Anti-sigma F factor (143 aa).

Belongs to the anti-sigma-factor family.

It catalyses the reaction L-seryl-[protein] + ATP = O-phospho-L-seryl-[protein] + ADP + H(+). The catalysed reaction is L-threonyl-[protein] + ATP = O-phospho-L-threonyl-[protein] + ADP + H(+). Functionally, binds to sigma F and blocks its ability to form an RNA polymerase holoenzyme (E-sigma F). Phosphorylates SpoIIAA on a serine residue. This phosphorylation may enable SpoIIAA to act as an anti-anti-sigma factor that counteracts SpoIIAB and thus releases sigma F from inhibition. This is Anti-sigma F factor from Clostridium novyi (strain NT).